A 158-amino-acid chain; its full sequence is Style cell-cycle inhibitor 1-B (158 aa).

Composition is skewed to basic and acidic residues over residues 1–11 and 22–47; these read MGSDKKTTEEK and PRDE…DKSK. Residues 1–88 are disordered; the sequence is MGSDKKTTEE…DKSKNKFEEL (88 aa). Basic residues-rich tracts occupy residues 48–58 and 67–81; these read KEKHKSHKSKC and GEKH…KDKS.

In terms of tissue distribution, specifically expressed in flowers pistils, especially in stigmas and styles. Barely detected in roots, stems, leaves, sepals, petals and stamen.

The protein resides in the nucleus. Functionally, component of the auxin signaling transduction pathway that regulates cell proliferation and differentiation during flowers stigmas and styles development. Involved in the regulation of auxin-related genes. This chain is Style cell-cycle inhibitor 1-B, found in Nicotiana tabacum (Common tobacco).